A 469-amino-acid chain; its full sequence is Diaminopimelate decarboxylase (469 aa).

Positions 1 to 23 (MLSTEMPLPTTGSTLLKTPASPS) are disordered. Lysine 93 is modified (N6-(pyridoxal phosphate)lysine). Residues glycine 279 and 321 to 324 (EPGR) each bind pyridoxal 5'-phosphate. Residues arginine 324, arginine 361, and tyrosine 365 each coordinate substrate. Cysteine 392 acts as the Proton donor in catalysis. The substrate site is built by glutamate 393 and tyrosine 421. Residue tyrosine 421 coordinates pyridoxal 5'-phosphate.

It belongs to the Orn/Lys/Arg decarboxylase class-II family. LysA subfamily. Homodimer. It depends on pyridoxal 5'-phosphate as a cofactor.

The enzyme catalyses meso-2,6-diaminopimelate + H(+) = L-lysine + CO2. It functions in the pathway amino-acid biosynthesis; L-lysine biosynthesis via DAP pathway; L-lysine from DL-2,6-diaminopimelate: step 1/1. In terms of biological role, specifically catalyzes the decarboxylation of meso-diaminopimelate (meso-DAP) to L-lysine. The sequence is that of Diaminopimelate decarboxylase from Synechocystis sp. (strain ATCC 27184 / PCC 6803 / Kazusa).